Reading from the N-terminus, the 45-residue chain is Lysis protein for colicin E1 (45 aa).

The signal sequence occupies residues 1–17; the sequence is MRKRFFVGIFAINLLVG. Residue C18 is the site of N-palmitoyl cysteine attachment. C18 carries the S-diacylglycerol cysteine lipid modification.

Its subcellular location is the cell outer membrane. Functionally, lysis proteins are required for both colicin release and partial cell lysis. In Escherichia coli, this protein is Lysis protein for colicin E1 (lys).